The following is a 199-amino-acid chain: Recombination protein RecR (199 aa).

A C4-type zinc finger spans residues 57–72 (CEKCNNFTEEVVCELC). In terms of domain architecture, Toprim spans 80-175 (ALLCVVEMPA…KITRIARGLP (96 aa)).

Belongs to the RecR family.

Its function is as follows. May play a role in DNA repair. It seems to be involved in an RecBC-independent recombinational process of DNA repair. It may act with RecF and RecO. This is Recombination protein RecR from Nitrosospira multiformis (strain ATCC 25196 / NCIMB 11849 / C 71).